The primary structure comprises 262 residues: Indole-3-glycerol phosphate synthase (262 aa).

The protein belongs to the TrpC family.

The catalysed reaction is 1-(2-carboxyphenylamino)-1-deoxy-D-ribulose 5-phosphate + H(+) = (1S,2R)-1-C-(indol-3-yl)glycerol 3-phosphate + CO2 + H2O. The protein operates within amino-acid biosynthesis; L-tryptophan biosynthesis; L-tryptophan from chorismate: step 4/5. This chain is Indole-3-glycerol phosphate synthase, found in Dechloromonas aromatica (strain RCB).